Consider the following 315-residue polypeptide: MPNLKAIRDRIKTIKDTRKITEAMRLVAAAKVRRAQEQVMASRPFADRLAQVLYGLQTRLRFEDANLPLLAKRPVKTVALLVVTGDRGLCGGYNTNVIRRAKERTEELEAEGIKYTLVIVGRKAAQYFQRRDYPIDAVYSGLEQIPSASEAGQIANELLSLFLSETVDRVELIYTKFVSLISSKPVVQTLLPLDPQGLEAADDEIFRLTTRASHLEVNREKVTSNLPALPPDMIFEQDPVQILDALLPLYLSNQLLRALQEAAASELAARMTAMNNASDNAQTLIGTLTLSYNKARQAAITQEILEVVAGAEALR.

It belongs to the ATPase gamma chain family. F-type ATPases have 2 components, CF(1) - the catalytic core - and CF(0) - the membrane proton channel. CF(1) has five subunits: alpha(3), beta(3), gamma(1), delta(1), epsilon(1). CF(0) has three main subunits: a, b and c.

It is found in the cellular thylakoid membrane. In terms of biological role, produces ATP from ADP in the presence of a proton gradient across the membrane. The gamma chain is believed to be important in regulating ATPase activity and the flow of protons through the CF(0) complex. This Synechococcus sp. (strain PCC 6716) protein is ATP synthase gamma chain.